Here is a 372-residue protein sequence, read N- to C-terminus: Alanine racemase (372 aa).

The active-site Proton acceptor; specific for D-alanine is the lysine 36. Lysine 36 bears the N6-(pyridoxal phosphate)lysine mark. A substrate-binding site is contributed by arginine 134. Residue tyrosine 266 is the Proton acceptor; specific for L-alanine of the active site. Methionine 314 serves as a coordination point for substrate.

It belongs to the alanine racemase family. Pyridoxal 5'-phosphate serves as cofactor.

The catalysed reaction is L-alanine = D-alanine. It functions in the pathway amino-acid biosynthesis; D-alanine biosynthesis; D-alanine from L-alanine: step 1/1. In terms of biological role, catalyzes the interconversion of L-alanine and D-alanine. May also act on other amino acids. This chain is Alanine racemase (alr), found in Nitratidesulfovibrio vulgaris (strain DSM 19637 / Miyazaki F) (Desulfovibrio vulgaris).